The following is a 272-amino-acid chain: Small ribosomal subunit protein uS2 (272 aa).

The tract at residues 251–272 (LLTEGAPAAEAPAEAEGETKAE) is disordered. The span at 253 to 264 (TEGAPAAEAPAE) shows a compositional bias: low complexity.

This sequence belongs to the universal ribosomal protein uS2 family.

The protein is Small ribosomal subunit protein uS2 of Bifidobacterium adolescentis (strain ATCC 15703 / DSM 20083 / NCTC 11814 / E194a).